The chain runs to 328 residues: D-cysteine desulfhydrase (328 aa).

An N6-(pyridoxal phosphate)lysine modification is found at lysine 51.

This sequence belongs to the ACC deaminase/D-cysteine desulfhydrase family. As to quaternary structure, homodimer. Pyridoxal 5'-phosphate serves as cofactor.

The enzyme catalyses D-cysteine + H2O = hydrogen sulfide + pyruvate + NH4(+) + H(+). Its function is as follows. Catalyzes the alpha,beta-elimination reaction of D-cysteine and of several D-cysteine derivatives. It could be a defense mechanism against D-cysteine. The protein is D-cysteine desulfhydrase of Salmonella paratyphi A (strain AKU_12601).